A 1029-amino-acid chain; its full sequence is Endosome/lysosome-associated apoptosis and autophagy regulator family member 2 (1029 aa).

The signal sequence occupies residues 1 to 47 (MLFRARGPVRGRGWGRPAEAPRRGRSPPWSPAWICCWALAGCQAAWA). The Extracellular segment spans residues 48 to 929 (GDLPSSSSRP…TCETVDFWLK (882 aa)). The N-linked (GlcNAc...) asparagine glycan is linked to N169. 3 cysteine pairs are disulfide-bonded: C293-C310, C323-C346, and C326-C358. N-linked (GlcNAc...) asparagine glycosylation is found at N405 and N691. The MRH domain maps to 672–877 (SDCFFYHEKE…LWESAEACPL (206 aa)). Cystine bridges form between C674/C720, C730/C758, C827/C863, and C839/C875. Residues 930-950 (VGAGVGAFTAVLLVALTCYFW) form a helical membrane-spanning segment. The Cytoplasmic portion of the chain corresponds to 951 to 1029 (KKNQKLEYKY…QLKTSRSPNI (79 aa)). The residue at position 1018 (S1018) is a Phosphoserine.

It belongs to the ELAPOR family.

It localises to the cell membrane. In terms of biological role, functions as a regulator of the BMP signaling pathway and may be involved in epidermal differentiation. This chain is Endosome/lysosome-associated apoptosis and autophagy regulator family member 2, found in Homo sapiens (Human).